Here is a 411-residue protein sequence, read N- to C-terminus: Putative competence-damage inducible protein (411 aa).

Belongs to the CinA family.

In Alkaliphilus metalliredigens (strain QYMF), this protein is Putative competence-damage inducible protein.